Reading from the N-terminus, the 426-residue chain is D-tagatose-1,6-bisphosphate aldolase subunit KbaZ (426 aa).

The protein belongs to the GatZ/KbaZ family. KbaZ subfamily. As to quaternary structure, forms a complex with KbaY.

Its pathway is carbohydrate metabolism; D-tagatose 6-phosphate degradation; D-glyceraldehyde 3-phosphate and glycerone phosphate from D-tagatose 6-phosphate: step 2/2. In terms of biological role, component of the tagatose-1,6-bisphosphate aldolase KbaYZ that is required for full activity and stability of the Y subunit. Could have a chaperone-like function for the proper and stable folding of KbaY. When expressed alone, KbaZ does not show any aldolase activity. The protein is D-tagatose-1,6-bisphosphate aldolase subunit KbaZ of Escherichia coli O1:K1 / APEC.